A 163-amino-acid chain; its full sequence is Phosphopantetheine adenylyltransferase (163 aa).

Substrate is bound at residue S9. Residues 9 to 10 (SF) and H17 contribute to the ATP site. Positions 41, 73, and 87 each coordinate substrate. ATP contacts are provided by residues 88–90 (GLR), E98, and 123–129 (YSFISSG).

It belongs to the bacterial CoaD family. As to quaternary structure, homohexamer. Requires Mg(2+) as cofactor.

It is found in the cytoplasm. It catalyses the reaction (R)-4'-phosphopantetheine + ATP + H(+) = 3'-dephospho-CoA + diphosphate. It participates in cofactor biosynthesis; coenzyme A biosynthesis; CoA from (R)-pantothenate: step 4/5. Its function is as follows. Reversibly transfers an adenylyl group from ATP to 4'-phosphopantetheine, yielding dephospho-CoA (dPCoA) and pyrophosphate. In Desulforudis audaxviator (strain MP104C), this protein is Phosphopantetheine adenylyltransferase.